The following is a 954-amino-acid chain: E3 ubiquitin-protein ligase arkadia (954 aa).

The segment covering 50–66 (LCSDTNKQQRDLNSNGT) has biased composition (polar residues). Disordered stretches follow at residues 50-175 (LCSD…VSSL) and 193-276 (RKRF…SGGM). Low complexity-rich tracts occupy residues 112–131 (SSFSDCISSPSSSSHFGDSD) and 232–251 (SSSSSSENDLSSESSSSSST). Residues 280-284 (VVVIE) carry the SUMO interaction motif 1 (SIM) motif. An SUMO interaction motif 2 (SIM) motif is present at residues 305–311 (EVEIVTV). Disordered regions lie at residues 318–346 (RTTLGHPRSHWGQNTQSGRTQEQRTRNRV), 364–452 (TVDE…MPRL), and 485–509 (HFPHHHHHHHQSSHPGVPLSPSFRD). Residues 328–337 (WGQNTQSGRT) show a composition bias toward polar residues. Residues 360–364 (VVDLT) carry the SUMO interaction motif 3 (SIM) motif. The segment covering 385–395 (VSTVSSNTSTS) has biased composition (low complexity). The span at 485-496 (HFPHHHHHHHQS) shows a compositional bias: basic residues. The tract at residues 867-869 (YPH) is ubiquitin binding. Positions 902 and 905 each coordinate Zn(2+). The RING-type; atypical zinc-finger motif lies at 902 to 943 (CTICLSILEEGEDVRRLPCMHLFHQVCVDQWLITNKKCPICR). Positions 917–921 (RLPCM) are ubiquitin binding. Zn(2+) is bound by residues histidine 925 and cysteine 928.

Belongs to the Arkadia family. In terms of assembly, monomer.

The protein resides in the nucleus. It is found in the cytoplasm. Its subcellular location is the PML body. It catalyses the reaction S-ubiquitinyl-[E2 ubiquitin-conjugating enzyme]-L-cysteine + [acceptor protein]-L-lysine = [E2 ubiquitin-conjugating enzyme]-L-cysteine + N(6)-ubiquitinyl-[acceptor protein]-L-lysine.. The protein operates within protein modification; protein ubiquitination. Its activity is regulated as follows. Binds free ubiquitin non-covalently via its RING-type zinc finger. Ubiquitin-binding leads to enhance the E3 ubiquitin-protein ligase activity by stabilizing the ubiquitin-conjugating enzyme E2 (donor ubiquitin) in the 'closed' conformation and activating ubiquitin transfer. Its function is as follows. E3 ubiquitin-protein ligase required for mesoderm patterning during embryonic development. Acts as an enhancer of the transcriptional responses of the smad2/smad3 effectors, which are activated downstream of BMP. Acts by mediating ubiquitination and degradation of SMAD inhibitors such as smad7, inducing their proteasomal degradation and thereby enhancing the transcriptional activity of TGF-beta and BMP. Specifically binds polysumoylated chains via SUMO interaction motifs (SIMs) and mediates ubiquitination of sumoylated substrates. The regulation of the BMP-SMAD signaling is however independent of sumoylation and is not dependent of SUMO interaction motifs (SIMs). The chain is E3 ubiquitin-protein ligase arkadia (rnf111) from Xenopus tropicalis (Western clawed frog).